Here is a 269-residue protein sequence, read N- to C-terminus: Zinc transporter ZupT (269 aa).

The next 8 helical transmembrane spans lie at I11–L31, L40–I60, Y80–P100, A125–F145, A158–F178, F187–L207, F217–L237, and T249–W269. Fe(2+)-binding residues include N136 and E139. Zn(2+) contacts are provided by E139 and H164. 3 residues coordinate Fe(2+): N165, E168, and E197. E168 provides a ligand contact to Zn(2+).

Belongs to the ZIP transporter (TC 2.A.5) family. ZupT subfamily.

It localises to the cell inner membrane. The enzyme catalyses Zn(2+)(in) = Zn(2+)(out). Mediates zinc uptake. May also transport other divalent cations. This Stenotrophomonas maltophilia (strain R551-3) protein is Zinc transporter ZupT.